The chain runs to 608 residues: Putative multicopper oxidase GMC1 (608 aa).

3 Plastocyanin-like domains span residues 51-163 (INGY…LIVE), 243-374 (LING…ELYR), and 421-548 (ERTF…FEVP). Cu cation contacts are provided by His100, His102, His145, and His147. Cu cation-binding residues include His452, His455, His457, His530, Cys531, His532, and His536.

It belongs to the multicopper oxidase family. The cofactor is Cu cation.

Could be an iron transport multicopper oxidase, which is required for Fe(2+) high affinity uptake. May be required to oxidize Fe(2+) and release it from the transporter. Essential component of copper-dependent iron transport. Involved in meiotic prophase and synaptonemal complex (SC) assembly. The sequence is that of Putative multicopper oxidase GMC1 (GMC1) from Saccharomyces cerevisiae (strain ATCC 204508 / S288c) (Baker's yeast).